Here is a 578-residue protein sequence, read N- to C-terminus: E3 ubiquitin-protein ligase hrd-like protein 1 (578 aa).

A helical transmembrane segment spans residues 32 to 52 (GYLALSLCVAFIASASVFTHF). Asn68 carries N-linked (GlcNAc...) asparagine glycosylation. A run of 7 helical transmembrane segments spans residues 76 to 96 (FGIN…HYIL), 101 to 121 (LIWV…KLII), 134 to 154 (VAAR…LSVV), 163 to 183 (VMPW…QFVT), 202 to 222 (SFIS…VSRF), 230 to 250 (PAVL…YILF), and 286 to 306 (FLSY…SIFF). The segment at 350–388 (CIVCWELLGTSRRLPCSHQFHDWCLMWWLAQDSSCPTCR) adopts an RING-type; atypical zinc-finger fold. The region spanning 447–489 (QLQSMLETVLEMFPQMSPETILADLRQSGSAQSTIENILEGRM) is the CUE domain. N-linked (GlcNAc...) asparagine glycosylation occurs at Asn492.

It localises to the membrane. Functionally, proposed to have a role in neuroprotection. This Caenorhabditis briggsae protein is E3 ubiquitin-protein ligase hrd-like protein 1.